The primary structure comprises 118 residues: Large ribosomal subunit protein bL20 (118 aa).

This sequence belongs to the bacterial ribosomal protein bL20 family.

Its function is as follows. Binds directly to 23S ribosomal RNA and is necessary for the in vitro assembly process of the 50S ribosomal subunit. It is not involved in the protein synthesizing functions of that subunit. This is Large ribosomal subunit protein bL20 from Thermosipho melanesiensis (strain DSM 12029 / CIP 104789 / BI429).